Consider the following 827-residue polypeptide: Inactive rhomboid protein 2 (827 aa).

The interval 1–87 (MDSTDKNGES…GFRRQASLSQ (87 aa)) is disordered. At 1-380 (MDSTDKNGES…HRPYFTYWLT (380 aa)) the chain is on the cytoplasmic side. Phosphoserine is present on S60. Residues 64–77 (QRGRWQEGSSEKRP) are compositionally biased toward basic and acidic residues. Residues S84, S88, S294, S296, and S299 each carry the phosphoserine modification. The chain crosses the membrane as a helical span at residues 381–401 (FVHIIITLLVICTYGIAPVGF). Over 402 to 631 (AQHVTTQLVL…PDQFYRLWLS (230 aa)) the chain is Lumenal. A helical transmembrane segment spans residues 632–652 (LFLHAGVVHCLVSVVFQMTIL). At 653–663 (RDLEKLAGWHR) the chain is on the cytoplasmic side. Residues 664–684 (IAIIFILSGITGNLASAIFLP) form a helical membrane-spanning segment. The Lumenal segment spans residues 685–686 (YR). A helical transmembrane segment spans residues 687–707 (AEVGPAGSQFGLLACLFVELF). Over 708–718 (QSWQLLERPWK) the chain is Cytoplasmic. A helical transmembrane segment spans residues 719–739 (AFLNLSAIVLFLFICGLLPWI). Residues 740-744 (DNIAH) lie on the Lumenal side of the membrane. A helical membrane pass occupies residues 745 to 765 (IFGFLSGLLLAFAFLPYITFG). Residues 766 to 773 (TSDKYRKR) lie on the Cytoplasmic side of the membrane. Residues 774–794 (ALILVSLLVFAGLFASLVIWL) traverse the membrane as a helical segment. Residues 795 to 827 (YVYPINWPWIEYLTCFPFTSRFCEKYELDQVLH) are Lumenal-facing.

This sequence belongs to the peptidase S54 family. As to quaternary structure, interacts with EGF. Interacts (via cytoplasmic N-terminus) with FRMD8/iTAP; this interaction leads to mutual protein stabilization. Interacts with ADAM17/TACE. Detected in retina and spleen.

The protein localises to the endoplasmic reticulum membrane. Its subcellular location is the cell membrane. Its function is as follows. Regulates ADAM17 protease, a sheddase of the epidermal growth factor (EGF) receptor ligands and TNF, thereby plays a role in sleep, cell survival, proliferation, migration and inflammation. Does not exhibit any protease activity on its own. This is Inactive rhomboid protein 2 (RHBDF2) from Canis lupus familiaris (Dog).